A 201-amino-acid polypeptide reads, in one-letter code: Recombination protein RecR (201 aa).

The C4-type zinc-finger motif lies at 57 to 72; that stretch reads CSDCRTFTEQDVCAIC. Positions 81-176 constitute a Toprim domain; it reads GLVCVVESPA…MASRIAHGVP (96 aa).

The protein belongs to the RecR family.

In terms of biological role, may play a role in DNA repair. It seems to be involved in an RecBC-independent recombinational process of DNA repair. It may act with RecF and RecO. The chain is Recombination protein RecR from Pectobacterium atrosepticum (strain SCRI 1043 / ATCC BAA-672) (Erwinia carotovora subsp. atroseptica).